The following is a 376-amino-acid chain: Natterin-2 (376 aa).

The first 18 residues, 1-18 (MNLSVLLVTLLLLSWTSA), serve as a signal peptide directing secretion. Residues 19–27 (EKDLKVRVA) constitute a propeptide that is removed on maturation.

Belongs to the natterin family. Post-translationally, contains 4 disulfide bonds. As to expression, expressed by the venom gland.

The protein localises to the secreted. Inhibited by tissue-kallikrein inhibitor TKI and trasylol. Plasma kallikrein inhibitor PKSI527 and classical inhibitors of serine-, metallo-, thiol- or aspartate-peptidases evokes a minor inhibition of the peptide digestion. Functionally, shows nociceptive, edema-inducing and kininogenase activity with release of kallidin from low molecular weight kininogen. The cleavage occurs at Met-Lys bonds. This is Natterin-2 from Thalassophryne nattereri (Copper Joe toadfish).